We begin with the raw amino-acid sequence, 272 residues long: MSAAEPFFATRLPRLVMFDLDGTLVDSVPDLTAAVDSMLASFGRPPAGIEKVRQWIGNGARVLVRRALAGSIEHDGIGEEETEAALALFMEAYADSHALTEVYPGVVDTLKWLKRNGVEMALITNKPERFVAPLLDEMKLGRYFRWIIGGDTLPQQKPDPAALLFVMKMAGIEPEDALFVGDSRNDVLAAKAAGVRCAALTYGYNHGRPIAEEAPTLVIDNLRDLLPCADQAAEIVLPDDSLSPSDQRDQAVAVSKLWMKVIKALARWRWRA.

Asp-19 (nucleophile) is an active-site residue. 3 residues coordinate Mg(2+): Asp-19, Asp-21, and Asp-182.

Belongs to the HAD-like hydrolase superfamily. CbbY/CbbZ/Gph/YieH family. Mg(2+) is required as a cofactor.

It carries out the reaction 2-phosphoglycolate + H2O = glycolate + phosphate. The protein operates within organic acid metabolism; glycolate biosynthesis; glycolate from 2-phosphoglycolate: step 1/1. Specifically catalyzes the dephosphorylation of 2-phosphoglycolate. Is involved in the dissimilation of the intracellular 2-phosphoglycolate formed during the DNA repair of 3'-phosphoglycolate ends, a major class of DNA lesions induced by oxidative stress. The protein is Phosphoglycolate phosphatase 1 of Pseudomonas aeruginosa (strain ATCC 15692 / DSM 22644 / CIP 104116 / JCM 14847 / LMG 12228 / 1C / PRS 101 / PAO1).